The primary structure comprises 126 residues: Large ribosomal subunit protein bL12 (126 aa).

It belongs to the bacterial ribosomal protein bL12 family. Homodimer. Part of the ribosomal stalk of the 50S ribosomal subunit. Forms a multimeric L10(L12)X complex, where L10 forms an elongated spine to which 2 to 4 L12 dimers bind in a sequential fashion. Binds GTP-bound translation factors.

In terms of biological role, forms part of the ribosomal stalk which helps the ribosome interact with GTP-bound translation factors. Is thus essential for accurate translation. This chain is Large ribosomal subunit protein bL12, found in Blochmanniella floridana.